We begin with the raw amino-acid sequence, 92 residues long: MTRSLKKNPFVAKHLLRKIEKLNTKAEKEIIITWSRASTIIPTMIGHTIAIHNGREHLPVYIIDLMVGHKLGEFSPTINFRGHAKNDTRSRR.

Belongs to the universal ribosomal protein uS19 family.

It localises to the plastid. It is found in the chloroplast. Protein S19 forms a complex with S13 that binds strongly to the 16S ribosomal RNA. The polypeptide is Small ribosomal subunit protein uS19c (Draba nemorosa (Woodland whitlowgrass)).